The primary structure comprises 582 residues: Semenogelin-2 (582 aa).

The signal sequence occupies residues 1-23 (MKSIILFVLSLLLILEKQAAVMG). The segment at 24-59 (QKGGSKGQLPSGSSQFPHGQKGQHYFGQKDQQHTKS) is disordered. Residues 31 to 40 (QLPSGSSQFP) are compositionally biased toward polar residues. Repeat copies occupy residues 70–129 (HVDI…IVIH), 141–200 (NPSQ…QTEE), and 201–260 (LVVN…QDEL). Residues 70–559 (HVDINDHDWT…SSESHNIVIT (490 aa)) form a repeat-rich region region. Disordered stretches follow at residues 132–160 (GGQAHHGTQNPSQDQGNSPSGKGLSSQCS), 173–194 (KEQASASGAQKGRTQGGSQSSY), 228–248 (EEHSSKLQTSLHPAHQDRLQH), and 269–582 (QTKN…PIST). 2 stretches are compositionally biased toward polar residues: residues 137–160 (HGTQNPSQDQGNSPSGKGLSSQCS) and 174–194 (EQASASGAQKGRTQGGSQSSY). Residues 261–500 (LVYNKNQHQT…QSSISFQIEK (240 aa)) are 4 X 60 AA tandem repeats, type I. Residue Asn-272 is glycosylated (N-linked (GlcNAc...) asparagine). Positions 292-310 (RTEERQLHHGEKSVQKDVS) are enriched in basic and acidic residues. Positions 325-334 (KSQNQVTIHS) are enriched in polar residues. The span at 335–345 (QDQEHGHKENK) shows a compositional bias: basic and acidic residues. Residues 372–397 (GSISIQTEEQIHGKSQNQVRIPSQAQ) show a composition bias toward polar residues. A compositionally biased stretch (basic and acidic residues) spans 413-426 (TEERRLNSGEKDVQ). Polar residues predominate over residues 445 to 455 (KSQNQVTIPSQ). Residues 456–465 (DQEHGHKENK) show a composition bias toward basic and acidic residues. 2 stretches are compositionally biased toward polar residues: residues 482–496 (GKSTQKDVSQSSISF) and 506–532 (SQIQTPNPNQDQWSGQNAKGKSGQSAD). Residues 501-559 (LVEGKSQIQTPNPNQDQWSGQNAKGKSGQSADSKQDLLSHEQKGRYKQESSESHNIVIT) form a 3-2 repeat. 2 stretches are compositionally biased toward basic and acidic residues: residues 533–552 (SKQDLLSHEQKGRYKQESSE) and 559–582 (TEHEVAQDDHLTQQYNEDRNPIST).

Belongs to the semenogelin family. As to quaternary structure, interacts with SERPINA5. Post-translationally, semenogelin-2 is thought to form both the 71 kDa polypeptide and, in its glycosylated form, the 76 kDa polypeptide. In terms of tissue distribution, seminal vesicles, and to a much lesser extent, epididymis.

It is found in the secreted. In terms of biological role, participates in the formation of a gel matrix (sperm coagulum) entrapping the accessory gland secretions and ejaculated spermatozoa. This Homo sapiens (Human) protein is Semenogelin-2 (SEMG2).